A 139-amino-acid polypeptide reads, in one-letter code: Large ribosomal subunit protein bL17 (139 aa).

This sequence belongs to the bacterial ribosomal protein bL17 family. In terms of assembly, part of the 50S ribosomal subunit. Contacts protein L32.

This Cereibacter sphaeroides (strain ATCC 17029 / ATH 2.4.9) (Rhodobacter sphaeroides) protein is Large ribosomal subunit protein bL17.